We begin with the raw amino-acid sequence, 92 residues long: RNA-binding protein Hfq (92 aa).

In terms of domain architecture, Sm spans 9 to 68 (DPFLNALRRERVPVSIYLVNGIKLQGQVESFDQFVILLKNTVSQMVYKHAISTVVPSRPF).

Belongs to the Hfq family. In terms of assembly, homohexamer.

Functionally, RNA chaperone that binds small regulatory RNA (sRNAs) and mRNAs to facilitate mRNA translational regulation in response to envelope stress, environmental stress and changes in metabolite concentrations. Also binds with high specificity to tRNAs. In Shewanella halifaxensis (strain HAW-EB4), this protein is RNA-binding protein Hfq.